The following is a 217-amino-acid chain: MNLAAIAKNYSMHNGESGAIVPYVPPPYNFASAPTFSQRTSQMESVSLGILNQAMSSTTGASGALKDEKAAFGAMAERLRDPEPIRQIKKQVGIRTLKNLKMELATMRRKKSALKITILISGCVTLATSMVGGLSIVDNEIFEDYKKNDWLMKAIHGLNLLCTTVLLAAGKISDKIQEEISRTKRDIAKRESYVSAASMSWNGDTEVLLQGIKYGDS.

Belongs to the orbivirus NS3 family.

In terms of biological role, may play a role in the release of virions from infected cells. The chain is Non-structural protein NS3 (Segment-10) from Camelus dromedarius (Dromedary).